The chain runs to 279 residues: MKSRGAGCSARLLLTVGWLLLAGLQSTCGINVTAIQDPSLAREGEGEPEGDEEPENDSETEKEPQAEAEDDSEGIGIREVILTSGCPGGESKCIVRVEECRGPVDCGWGRPISESLEHVRLACVHTSPENRFKYIWRLLRPDQQAIILANDSAILEVHRDTHPKAFECETLDNNEIVASIRFTIYTTTELQMKRASRPDTDAVLVFVLTIGVIICIFVIFVLIFIIINWTAVKDFWAKASTTEIQSELSSMRYKDSTSLDQSPTDIPGHEDDALSEWNE.

Positions 1–29 (MKSRGAGCSARLLLTVGWLLLAGLQSTCG) are cleaved as a signal peptide. Topologically, residues 30–221 (INVTAIQDPS…VIICIFVIFV (192 aa)) are extracellular. N-linked (GlcNAc...) asparagine glycosylation occurs at N31. Residues 39–74 (SLAREGEGEPEGDEEPENDSETEKEPQAEAEDDSEG) are disordered. The span at 46-58 (GEPEGDEEPENDS) shows a compositional bias: acidic residues. Residues 222-242 (LIFIIINWTAVKDFWAKASTT) traverse the membrane as a helical segment. Over 243-279 (EIQSELSSMRYKDSTSLDQSPTDIPGHEDDALSEWNE) the chain is Cytoplasmic. The residue at position 253 (Y253) is a Phosphotyrosine. The interval 253–279 (YKDSTSLDQSPTDIPGHEDDALSEWNE) is disordered. Residues S262 and S275 each carry the phosphoserine modification.

As to quaternary structure, interacts with CYLC1; the interaction may be relevant for proper acrosome attachment to the nuclear envelope. Post-translationally, N-glycosylated.

It is found in the cytoplasmic vesicle. The protein resides in the secretory vesicle. The protein localises to the acrosome inner membrane. In terms of biological role, plays a role in acrosome expansion and establishment of normal sperm morphology during spermatogenesis. Important for male fertility. In Bos taurus (Bovine), this protein is Sperm acrosome membrane-associated protein 1 (SPACA1).